The following is an 88-amino-acid chain: MANIKSAKKRISVIEKKTALNRVRKSQIKTAIRRFEDAVAAGNREDAVAKFQYAQKRIYQVASKGTIHKNAAARKVAKLAQKLNGMNA.

It belongs to the bacterial ribosomal protein bS20 family.

Binds directly to 16S ribosomal RNA. The polypeptide is Small ribosomal subunit protein bS20 (Clostridioides difficile (strain 630) (Peptoclostridium difficile)).